Reading from the N-terminus, the 245-residue chain is 1-(5-phosphoribosyl)-5-[(5-phosphoribosylamino)methylideneamino] imidazole-4-carboxamide isomerase (245 aa).

The Proton acceptor role is filled by Asp8. The active-site Proton donor is the Asp130.

The protein belongs to the HisA/HisF family.

The protein resides in the cytoplasm. The enzyme catalyses 1-(5-phospho-beta-D-ribosyl)-5-[(5-phospho-beta-D-ribosylamino)methylideneamino]imidazole-4-carboxamide = 5-[(5-phospho-1-deoxy-D-ribulos-1-ylimino)methylamino]-1-(5-phospho-beta-D-ribosyl)imidazole-4-carboxamide. Its pathway is amino-acid biosynthesis; L-histidine biosynthesis; L-histidine from 5-phospho-alpha-D-ribose 1-diphosphate: step 4/9. In Pseudomonas putida (strain GB-1), this protein is 1-(5-phosphoribosyl)-5-[(5-phosphoribosylamino)methylideneamino] imidazole-4-carboxamide isomerase.